The sequence spans 304 residues: Acetylglutamate kinase (304 aa).

Residues G77 to G78, R99, and N193 contribute to the substrate site.

It belongs to the acetylglutamate kinase family. ArgB subfamily.

Its subcellular location is the cytoplasm. It carries out the reaction N-acetyl-L-glutamate + ATP = N-acetyl-L-glutamyl 5-phosphate + ADP. The protein operates within amino-acid biosynthesis; L-arginine biosynthesis; N(2)-acetyl-L-ornithine from L-glutamate: step 2/4. Its function is as follows. Catalyzes the ATP-dependent phosphorylation of N-acetyl-L-glutamate. This Pelodictyon phaeoclathratiforme (strain DSM 5477 / BU-1) protein is Acetylglutamate kinase.